A 163-amino-acid polypeptide reads, in one-letter code: Probable ribosome biogenesis protein RLP24 (163 aa).

This sequence belongs to the eukaryotic ribosomal protein eL24 family. As to quaternary structure, associated with nucleolar and cytoplasmic pre-60S particles. At the end of biogenesis it dissociates from cytoplasmic pre-60S particles and is likely to be exchanged for its ribosomal homolog, RPL24.

It is found in the nucleus. Its subcellular location is the nucleolus. Functionally, involved in the biogenesis of the 60S ribosomal subunit. Ensures the docking of GTPBP4/NOG1 to pre-60S particles. This Bos taurus (Bovine) protein is Probable ribosome biogenesis protein RLP24 (RSL24D1).